Reading from the N-terminus, the 81-residue chain is Photosystem I iron-sulfur center (81 aa).

2 4Fe-4S ferredoxin-type domains span residues 2–31 (SHSV…MIPW) and 39–68 (IASA…VRVY). Residues Cys-11, Cys-14, Cys-17, Cys-21, Cys-48, Cys-51, Cys-54, and Cys-58 each coordinate [4Fe-4S] cluster.

The eukaryotic PSI reaction center is composed of at least 11 subunits. It depends on [4Fe-4S] cluster as a cofactor.

Its subcellular location is the plastid. The protein resides in the chloroplast thylakoid membrane. The catalysed reaction is reduced [plastocyanin] + hnu + oxidized [2Fe-2S]-[ferredoxin] = oxidized [plastocyanin] + reduced [2Fe-2S]-[ferredoxin]. Functionally, apoprotein for the two 4Fe-4S centers FA and FB of photosystem I (PSI); essential for photochemical activity. FB is the terminal electron acceptor of PSI, donating electrons to ferredoxin. The C-terminus interacts with PsaA/B/D and helps assemble the protein into the PSI complex. Required for binding of PsaD and PsaE to PSI. PSI is a plastocyanin-ferredoxin oxidoreductase, converting photonic excitation into a charge separation, which transfers an electron from the donor P700 chlorophyll pair to the spectroscopically characterized acceptors A0, A1, FX, FA and FB in turn. The chain is Photosystem I iron-sulfur center from Phaseolus vulgaris (Kidney bean).